Consider the following 335-residue polypeptide: uncharacterized protein (335 aa).

Helical transmembrane passes span 104–124 (FKKV…MGLL), 128–148 (LLQG…LSLF), 280–300 (LAFG…TMIG), and 310–330 (TINL…GIFV).

Its subcellular location is the cell membrane. This is an uncharacterized protein from Methanocaldococcus jannaschii (strain ATCC 43067 / DSM 2661 / JAL-1 / JCM 10045 / NBRC 100440) (Methanococcus jannaschii).